Reading from the N-terminus, the 190-residue chain is Potassium-transporting ATPase KdpC subunit (190 aa).

Residues 10-30 form a helical membrane-spanning segment; that stretch reads TFLFLLLITGGVYPLLTTALG.

It belongs to the KdpC family. In terms of assembly, the system is composed of three essential subunits: KdpA, KdpB and KdpC.

The protein resides in the cell inner membrane. In terms of biological role, part of the high-affinity ATP-driven potassium transport (or Kdp) system, which catalyzes the hydrolysis of ATP coupled with the electrogenic transport of potassium into the cytoplasm. This subunit acts as a catalytic chaperone that increases the ATP-binding affinity of the ATP-hydrolyzing subunit KdpB by the formation of a transient KdpB/KdpC/ATP ternary complex. The polypeptide is Potassium-transporting ATPase KdpC subunit (Escherichia coli O45:K1 (strain S88 / ExPEC)).